Here is a 77-residue protein sequence, read N- to C-terminus: Large ribosomal subunit protein bL28 (77 aa).

Belongs to the bacterial ribosomal protein bL28 family.

The polypeptide is Large ribosomal subunit protein bL28 (Albidiferax ferrireducens (strain ATCC BAA-621 / DSM 15236 / T118) (Rhodoferax ferrireducens)).